Consider the following 1200-residue polypeptide: Nuclear envelope pore membrane protein POM 121 (1200 aa).

The interval 1-29 (MSPAAAAADGGERRRPPLGGREGRSRARG) is disordered. Residues 1–56 (MSPAAAAADGGERRRPPLGGREGRSRARGYGGPAGAAALGLALLGLALYLVPAAAA) are cisternal side. Over residues 10 to 25 (GGERRRPPLGGREGRS) the composition is skewed to basic and acidic residues. Residues 57-77 (LAWLAVGASAAWWGLSREPRG) form a helical membrane-spanning segment. The tract at residues 76–1200 (RGPRALSSFV…QARRQHTRKK (1125 aa)) is pore side. Ser83 bears the Phosphoserine mark. Disordered stretches follow at residues 91-167 (HPRP…SAVQ) and 177-196 (PTPL…GPLS). The span at 143-152 (LRQDPRERPG) shows a compositional bias: basic and acidic residues. At Ser244 the chain carries Phosphoserine. Disordered regions lie at residues 294 to 328 (KKKR…SAFE), 345 to 509 (SLKR…ITAE), 530 to 627 (PDDA…SDSK), 640 to 692 (SITP…LATP), 706 to 744 (PATP…PTFK), 1075 to 1151 (TSGT…SSLS), and 1173 to 1200 (PSFS…TRKK). The segment covering 298–312 (TVAEEDQLHLDGQEN) has biased composition (basic and acidic residues). Ser319, Ser322, Ser325, Ser345, Ser355, Ser367, and Ser370 each carry phosphoserine. Over residues 365 to 374 (TSSVSSLASA) the composition is skewed to low complexity. Positions 379-397 (IPSSSRNAITSSYSSTRGI) are enriched in polar residues. Low complexity predominate over residues 404–419 (SGPTSSPFSSPASSRS). Ser408, Ser409, Ser412, Ser413, Ser416, and Ser417 each carry phosphoserine. 2 stretches are compositionally biased toward basic and acidic residues: residues 424-433 (RPAKKTREEE) and 446-456 (TDKESPGEKVT). Low complexity-rich tracts occupy residues 463-477 (QQSS…GSSG), 546-574 (PPFT…PLLE), 581-598 (ESPA…TVAA), and 605-621 (PSLL…PLAS). The span at 640-657 (SITPLTDSKSSGVSQAEQ) shows a compositional bias: polar residues. Low complexity-rich tracts occupy residues 658–669 (SVSTPASTASSP), 681–692 (SPPASSSSLATP), 715–742 (SPLP…TTPT), and 1075–1099 (TSGT…GSLS). Residues 1100 to 1121 (QNTLGAPSQGSPFAFSVGSTPE) show a composition bias toward polar residues. A compositionally biased stretch (basic residues) spans 1190–1200 (LQARRQHTRKK).

The protein belongs to the POM121 family. Post-translationally, proteolytically cleaved by caspase-3 during apoptosis.

The protein resides in the nucleus. Its subcellular location is the nuclear pore complex. The protein localises to the nucleus membrane. It localises to the endoplasmic reticulum membrane. Its function is as follows. Essential component of the nuclear pore complex (NPC). The repeat-containing domain may be involved in anchoring components of the pore complex to the pore membrane. When overexpressed in cells induces the formation of cytoplasmic annulate lamellae (AL). The polypeptide is Nuclear envelope pore membrane protein POM 121 (Pom121) (Mus musculus (Mouse)).